Reading from the N-terminus, the 73-residue chain is Large ribosomal subunit protein bL31 (73 aa).

Zn(2+) contacts are provided by cysteine 16, cysteine 18, cysteine 37, and cysteine 40.

Belongs to the bacterial ribosomal protein bL31 family. Type A subfamily. Part of the 50S ribosomal subunit. The cofactor is Zn(2+).

Binds the 23S rRNA. The sequence is that of Large ribosomal subunit protein bL31 from Marinobacter nauticus (strain ATCC 700491 / DSM 11845 / VT8) (Marinobacter aquaeolei).